The following is a 159-amino-acid chain: Transcription elongation factor GreA (159 aa).

Residues 47 to 77 adopt a coiled-coil conformation; the sequence is SENAEYDAARDKQATIENEITEIQHILDNYE.

It belongs to the GreA/GreB family.

Necessary for efficient RNA polymerase transcription elongation past template-encoded arresting sites. The arresting sites in DNA have the property of trapping a certain fraction of elongating RNA polymerases that pass through, resulting in locked ternary complexes. Cleavage of the nascent transcript by cleavage factors such as GreA or GreB allows the resumption of elongation from the new 3'terminus. GreA releases sequences of 2 to 3 nucleotides. This Metamycoplasma arthritidis (strain 158L3-1) (Mycoplasma arthritidis) protein is Transcription elongation factor GreA.